The chain runs to 538 residues: Lipid scramblase CLPTM1L (538 aa).

Over Met-1–Ser-10 the chain is Cytoplasmic. The helical transmembrane segment at Leu-11–Val-31 threads the bilayer. The Extracellular segment spans residues Tyr-32–Leu-284. Asn-91 and Asn-101 each carry an N-linked (GlcNAc...) asparagine glycan. A helical transmembrane segment spans residues Tyr-285 to Phe-305. Residues Lys-306 to Lys-324 lie on the Cytoplasmic side of the membrane. A helical transmembrane segment spans residues Ala-325–Asp-342. Residues Glu-343–Ser-346 lie on the Extracellular side of the membrane. The chain crosses the membrane as a helical span at residues Leu-347–Val-364. Residues Lys-365–Lys-402 are Cytoplasmic-facing. Residues Tyr-403–Ile-423 traverse the membrane as a helical segment. Residues Lys-424–Trp-428 are Extracellular-facing. The helical transmembrane segment at Tyr-429–Leu-449 threads the bilayer. Residues Pro-450–Asp-538 lie on the Cytoplasmic side of the membrane.

Belongs to the CLPTM1 family.

The protein resides in the endoplasmic reticulum membrane. It carries out the reaction a 6-(alpha-D-glucosaminyl)-1-(1,2-diacyl-sn-glycero-3-phospho)-1D-myo-inositol(in) = a 6-(alpha-D-glucosaminyl)-1-(1,2-diacyl-sn-glycero-3-phospho)-1D-myo-inositol(out). The enzyme catalyses 6-(alpha-D-glucosaminyl)-(1-octadecanoyl,2-(9Z)-octadecenoyl-sn-glycero-3-phospho)-1D-myo-inositol(in) = 6-(alpha-D-glucosaminyl)-(1-octadecanoyl,2-(9Z)-octadecenoyl-sn-glycero-3-phospho)-1D-myo-inositol(out). The catalysed reaction is a 1,2-diacyl-sn-glycero-3-phospho-(1D-myo-inositol)(in) = a 1,2-diacyl-sn-glycero-3-phospho-(1D-myo-inositol)(out). It catalyses the reaction a 1,2-diacyl-sn-glycero-3-phosphocholine(in) = a 1,2-diacyl-sn-glycero-3-phosphocholine(out). It carries out the reaction a 1,2-diacyl-sn-glycero-3-phosphoethanolamine(in) = a 1,2-diacyl-sn-glycero-3-phosphoethanolamine(out). Scramblase that mediates the translocation of glucosaminylphosphatidylinositol (alpha-D-GlcN-(1-6)-(1,2-diacyl-sn-glycero-3-phospho)-1D-myo-inositol, GlcN-PI) across the endoplasmic reticulum (ER) membrane, from the cytosolic leaflet to the luminal leaflet of the ER membrane, where it participates in the biosynthesis of glycosylphosphatidylinositol (GPI). GPI is a lipid glycoconjugate involved in post-translational modification of proteins. Can also translocate 1,2-diacyl-sn-glycero-3-phospho-(1D-myo-inositol) (phosphatidylinositol or PI), as well as several other phospholipids (1,2-diacyl-sn-glycero-3-phosphocholine, 1,2-diacyl-sn-glycero-3-phosphoethanolamine), and N-acetylglucosaminylphosphatidylinositol (GlcNAc-PI) in vitro. In Pongo abelii (Sumatran orangutan), this protein is Lipid scramblase CLPTM1L (CLPTM1L).